Reading from the N-terminus, the 127-residue chain is Glycine cleavage system H protein (127 aa).

Positions Glu22–Glu104 constitute a Lipoyl-binding domain. Lys63 carries the post-translational modification N6-lipoyllysine.

It belongs to the GcvH family. The glycine cleavage system is composed of four proteins: P, T, L and H. The cofactor is (R)-lipoate.

Its function is as follows. The glycine cleavage system catalyzes the degradation of glycine. The H protein shuttles the methylamine group of glycine from the P protein to the T protein. Is also involved in protein lipoylation via its role as an octanoyl/lipoyl carrier protein intermediate. The protein is Glycine cleavage system H protein of Bacillus cereus (strain ATCC 10987 / NRS 248).